The following is a 718-amino-acid chain: Peroxisomal bifunctional enzyme (718 aa).

The interval 2 to 280 (ARYELVKRSV…FAQRTAEKWT (279 aa)) is enoyl-CoA hydratase / isomerase. A substrate-binding site is contributed by Gly100. Residues 281–567 (LPSGAQWNNS…DMVCQQGRFG (287 aa)) form a 3-hydroxyacyl-CoA dehydrogenase region. Positions 716–718 (SHL) match the Microbody targeting signal motif.

The protein in the N-terminal section; belongs to the enoyl-CoA hydratase/isomerase family. In the C-terminal section; belongs to the 3-hydroxyacyl-CoA dehydrogenase family. As to quaternary structure, monomer.

It localises to the peroxisome. The catalysed reaction is a (3S)-3-hydroxyacyl-CoA = a (2E)-enoyl-CoA + H2O. It catalyses the reaction a 4-saturated-(3S)-3-hydroxyacyl-CoA = a (3E)-enoyl-CoA + H2O. It carries out the reaction a (3Z)-enoyl-CoA = a 4-saturated (2E)-enoyl-CoA. The enzyme catalyses a (3E)-enoyl-CoA = a 4-saturated (2E)-enoyl-CoA. The catalysed reaction is a (3S)-3-hydroxyacyl-CoA + NAD(+) = a 3-oxoacyl-CoA + NADH + H(+). It catalyses the reaction (2S,3S)-3-hydroxy-2-methylbutanoyl-CoA = (2E)-2-methylbut-2-enoyl-CoA + H2O. It carries out the reaction (3S)-hydroxyhexadecanoyl-CoA + NAD(+) = 3-oxohexadecanoyl-CoA + NADH + H(+). The enzyme catalyses (3S)-hydroxyhexadecanoyl-CoA = (2E)-hexadecenoyl-CoA + H2O. The catalysed reaction is (2E)-hexadecenedioyl-CoA + H2O = (3S)-hydroxyhexadecanedioyl-CoA. It catalyses the reaction (3S)-hydroxyhexadecanedioyl-CoA + NAD(+) = 3-oxohexadecanedioyl-CoA + NADH + H(+). It carries out the reaction (3E,5Z)-tetradecadienoyl-CoA = (2E,5Z)-tetradecadienoyl-CoA. The enzyme catalyses (3E,5Z)-octadienoyl-CoA = (2E,5Z)-octadienoyl-CoA. The catalysed reaction is (3S)-hydroxydecanoyl-CoA + NAD(+) = 3-oxodecanoyl-CoA + NADH + H(+). It catalyses the reaction (3E)-decenoyl-CoA = (2E)-decenoyl-CoA. It carries out the reaction (3Z)-hexenoyl-CoA = (2E)-hexenoyl-CoA. The enzyme catalyses (3E)-hexenoyl-CoA = (2E)-hexenoyl-CoA. The catalysed reaction is (3S)-hydroxydecanoyl-CoA = (2E)-decenoyl-CoA + H2O. It catalyses the reaction (3S)-hydroxyhexanoyl-CoA = (2E)-hexenoyl-CoA + H2O. It functions in the pathway lipid metabolism; fatty acid beta-oxidation. Its function is as follows. Peroxisomal trifunctional enzyme possessing 2-enoyl-CoA hydratase, 3-hydroxyacyl-CoA dehydrogenase, and delta 3, delta 2-enoyl-CoA isomerase activities. Catalyzes two of the four reactions of the long straight chain fatty acids peroxisomal beta-oxidation pathway. Can also use branched-chain fatty acids such as 2-methyl-2E-butenoyl-CoA as a substrate, which is hydrated into (2S,3S)-3-hydroxy-2-methylbutanoyl-CoA. Optimal isomerase for 2,5 double bonds into 3,5 form isomerization in a range of enoyl-CoA species. Also able to isomerize both 3-cis and 3-trans double bonds into the 2-trans form in a range of enoyl-CoA species. Regulates the amount of medium-chain dicarboxylic fatty acids which are essential regulators of all fatty acid oxidation pathways. Also involved in the degradation of long-chain dicarboxylic acids through peroxisomal beta-oxidation. The sequence is that of Peroxisomal bifunctional enzyme (ehhadh) from Danio rerio (Zebrafish).